The sequence spans 205 residues: Leucyl/phenylalanyl-tRNA--protein transferase (205 aa).

This sequence belongs to the L/F-transferase family.

It localises to the cytoplasm. The catalysed reaction is N-terminal L-lysyl-[protein] + L-leucyl-tRNA(Leu) = N-terminal L-leucyl-L-lysyl-[protein] + tRNA(Leu) + H(+). It catalyses the reaction N-terminal L-arginyl-[protein] + L-leucyl-tRNA(Leu) = N-terminal L-leucyl-L-arginyl-[protein] + tRNA(Leu) + H(+). It carries out the reaction L-phenylalanyl-tRNA(Phe) + an N-terminal L-alpha-aminoacyl-[protein] = an N-terminal L-phenylalanyl-L-alpha-aminoacyl-[protein] + tRNA(Phe). Its function is as follows. Functions in the N-end rule pathway of protein degradation where it conjugates Leu, Phe and, less efficiently, Met from aminoacyl-tRNAs to the N-termini of proteins containing an N-terminal arginine or lysine. This chain is Leucyl/phenylalanyl-tRNA--protein transferase, found in Mesorhizobium japonicum (strain LMG 29417 / CECT 9101 / MAFF 303099) (Mesorhizobium loti (strain MAFF 303099)).